The sequence spans 188 residues: Translocon-associated protein subunit beta (188 aa).

The N-terminal stretch at methionine 1–cysteine 15 is a signal peptide. The Lumenal portion of the chain corresponds to valine 16–tyrosine 151. Asparagine 93 and asparagine 109 each carry an N-linked (GlcNAc...) asparagine glycan. The chain crosses the membrane as a helical span at residues threonine 152–phenylalanine 172. Residues glutamine 173–threonine 188 are Cytoplasmic-facing.

Belongs to the TRAP-beta family. As to quaternary structure, heterotetramer of TRAP-alpha, TRAP-beta, TRAP-delta and TRAP-gamma.

It is found in the endoplasmic reticulum membrane. Its function is as follows. TRAP proteins are part of a complex whose function is to bind calcium to the ER membrane and thereby regulate the retention of ER resident proteins. The polypeptide is Translocon-associated protein subunit beta (Caenorhabditis elegans).